Reading from the N-terminus, the 797-residue chain is Cleavage factor two protein 2 (797 aa).

Disordered stretches follow at residues 519–557 (ENDS…EVPS) and 677–703 (PSEE…KKEE). Residues 684-703 (KEEVEKKDGDKERNEEKKEE) show a composition bias toward basic and acidic residues.

As to quaternary structure, component of the cleavage and polyadenylation factor (CPF) complex, which is composed of cft1, cft2, ysh1, pta1, swd2, pfs2, dis2, yth1, ssu72, and fip1.

It is found in the nucleus. In terms of biological role, RNA-binding component of the cleavage and polyadenylation factor (CPF) complex, which plays a key role in polyadenylation-dependent pre-mRNA 3'-end formation and cooperates with cleavage factors including the CFIA complex and NAB4/CFIB. May be involved in poly(A)-site recognition. May be involved in the association of the CPF, CPFIA and RNA polymerase II complexes. In Schizosaccharomyces pombe (strain 972 / ATCC 24843) (Fission yeast), this protein is Cleavage factor two protein 2 (cft2).